A 403-amino-acid polypeptide reads, in one-letter code: DNA primase DnaG (403 aa).

The Toprim domain occupies 172-248; sequence DSVIIVEGRA…HIDYIARAPP (77 aa). Mg(2+) contacts are provided by glutamate 178, aspartate 222, and aspartate 224. The interval 279 to 300 is disordered; sequence AAGEKTEAPAQPTQQQPPPAEA.

It belongs to the archaeal DnaG primase family. Forms a ternary complex with MCM helicase and DNA. Component of the archaeal exosome complex. Requires Mg(2+) as cofactor.

The catalysed reaction is ssDNA + n NTP = ssDNA/pppN(pN)n-1 hybrid + (n-1) diphosphate.. Its function is as follows. RNA polymerase that catalyzes the synthesis of short RNA molecules used as primers for DNA polymerase during DNA replication. Also part of the exosome, which is a complex involved in RNA degradation. Acts as a poly(A)-binding protein that enhances the interaction between heteromeric, adenine-rich transcripts and the exosome. The chain is DNA primase DnaG from Pyrobaculum neutrophilum (strain DSM 2338 / JCM 9278 / NBRC 100436 / V24Sta) (Thermoproteus neutrophilus).